Here is an 86-residue protein sequence, read N- to C-terminus: Large ribosomal subunit protein uL23 (86 aa).

This sequence belongs to the universal ribosomal protein uL23 family. Part of the 50S ribosomal subunit. Contacts protein L29.

Binds to 23S rRNA. One of the proteins that surrounds the polypeptide exit tunnel on the outside of the ribosome. The chain is Large ribosomal subunit protein uL23 from Methanococcus maripaludis (strain C7 / ATCC BAA-1331).